Reading from the N-terminus, the 221-residue chain is MDYRNQSLGALAIAIPRATKLFRQHQLDFCCGGKQTLLRAANKLNLDIDALEAQLSALQTEPHSSEDWQQQPLTNLISFIISRYHDRHREQLPELVLMAEKVERVHGDKPTCPRGLAAELSAILEELTQHMYKEEQILFPMIQRGMGSQASGPIFVMEAEHDAVGQQLDVVKQLTQNVTPPEGACNTWRALYTGINEFITDLMEHIHLENNLLFPRALRGE.

The protein belongs to the RIC family. YtfE subfamily. As to quaternary structure, homodimer.

The protein resides in the cytoplasm. Di-iron-containing protein involved in the repair of iron-sulfur clusters damaged by oxidative and nitrosative stress conditions. This is Iron-sulfur cluster repair protein YtfE from Yersinia pseudotuberculosis serotype O:1b (strain IP 31758).